The sequence spans 30 residues: MTVKIAQKKVLPVIGRAAALCGSCYPCSCM.

Residues 1 to 19 (MTVKIAQKKVLPVIGRAAA) constitute a propeptide that is removed on maturation. Positions 20–21 (LC) form a cross-link, 2-(3-methylbutanoyl)-5-hydroxyoxazole-4-carbothionic acid (Leu-Cys). The Cu(2+) site is built by Cys-21 and Cys-27. An intrachain disulfide couples Cys-24 to Cys-29. A cross-link (proline 5-hydroxy-oxazole-4-carbothionic acid (Pro-Cys)) is located at residues 26 to 27 (PC).

As to quaternary structure, monomer. In the absence of copper, may exist as a dimer or an oligomer.

The protein resides in the secreted. Its subcellular location is the cytoplasm. The catalysed reaction is 2 superoxide + 2 H(+) = H2O2 + O2. Its function is as follows. Chalkophore involved in scavenging, uptake and suppression of toxicity of copper. Each apo-methanobactin (apo-mb) complexes 1 Cu(2+) or Cu(1+) ion to form Cu(1+)-mb (Cu-mb) which is then taken up by the cell. Enhances growth rate in the presence of copper and reduces growth lag upon exposition to elevated levels of copper. Cu-mb contributes to the switchover from soluble methane monooxygenase (sMMO) to the membrane-bound particulate MMO (pMMO) by inducing transcription of pMMO subunit A. It also stimulates the enzymatic activity of pMMO. In the absence of copper, binds other metal ions, like Zn(2+), Ag(1+), Au(3+), Co(2+), Cd(2+), Fe(3+), Hg(2+), Mn(2+), Ni(2+), Pb(2+) or U(6+), but not Ba(2+), Ca(2+), La(2+), Mg(2+) or Sr(2+). Uptake is an active process, which may involve TonB-dependent transporters, and as such does not involve porins. Cu-Mb can be taken up by other methanotrophic bacteria but not by E.coli. Has Cu-dependent superoxide dismutase-like activity. Shows reductant-dependent oxidase and hydrogen peroxide reductase activities. Reduces copper-levels in liver in a rat model of Wilson disease. The chain is Methanobactin mb-OB3b from Methylosinus trichosporium.